The chain runs to 170 residues: ATP synthase subunit b (170 aa).

The helical transmembrane segment at 30 to 50 (FFFVLAIFLVVLAVIGTFVVP) threads the bilayer.

Belongs to the ATPase B chain family. In terms of assembly, F-type ATPases have 2 components, F(1) - the catalytic core - and F(0) - the membrane proton channel. F(1) has five subunits: alpha(3), beta(3), gamma(1), delta(1), epsilon(1). F(0) has three main subunits: a(1), b(2) and c(10-14). The alpha and beta chains form an alternating ring which encloses part of the gamma chain. F(1) is attached to F(0) by a central stalk formed by the gamma and epsilon chains, while a peripheral stalk is formed by the delta and b chains.

Its subcellular location is the cell membrane. In terms of biological role, f(1)F(0) ATP synthase produces ATP from ADP in the presence of a proton or sodium gradient. F-type ATPases consist of two structural domains, F(1) containing the extramembraneous catalytic core and F(0) containing the membrane proton channel, linked together by a central stalk and a peripheral stalk. During catalysis, ATP synthesis in the catalytic domain of F(1) is coupled via a rotary mechanism of the central stalk subunits to proton translocation. Functionally, component of the F(0) channel, it forms part of the peripheral stalk, linking F(1) to F(0). This Mycobacterium ulcerans (strain Agy99) protein is ATP synthase subunit b.